The sequence spans 27 residues: KCRECGNTSPSCYFSGNCVNGKCVCPA.

Intrachain disulfides connect Cys5/Cys18 and Cys12/Cys25.

In terms of tissue distribution, expressed by the venom gland.

The protein resides in the secreted. Functionally, blocker of voltage-gated potassium channels. Inhibits voltage-gated potassium channels Kv1.2/KCNA2 (Kd=0.96 nM) and Kv1.3/KCNA3 (Kd=1.3 nM). Does not inhibit Kv1.1/KCNA1, Kv1.5/KCNA5, Kv11.1/KCNH2/ERG1, KCa1.1/KCNMA1, KCa3.1/KCNN4, NaV1.5/SCN5A, NaV1.4/SCN4A or HV1/HVCN1. Strongly inhibits the expression of the activation markers interleukin-2 receptor and CD40 ligand/CD40LG in anti-CD3-activated CD4(+) TEM lymphocytes. The protein is Potassium channel toxin alpha-KTx 32.1 of Centruroides margaritatus (Central American bark Scorpion).